The chain runs to 267 residues: tRNA pseudouridine synthase A (267 aa).

The active-site Nucleophile is the aspartate 53. Residue tyrosine 114 participates in substrate binding.

It belongs to the tRNA pseudouridine synthase TruA family. As to quaternary structure, homodimer.

It catalyses the reaction uridine(38/39/40) in tRNA = pseudouridine(38/39/40) in tRNA. In terms of biological role, formation of pseudouridine at positions 38, 39 and 40 in the anticodon stem and loop of transfer RNAs. The protein is tRNA pseudouridine synthase A of Chlamydia muridarum (strain MoPn / Nigg).